A 291-amino-acid chain; its full sequence is Co-chaperone protein DjlA (291 aa).

Over 1-6 the chain is Periplasmic; the sequence is MRYWGK. The helical transmembrane segment at 7–31 threads the bilayer; that stretch reads LLGLALGIVSSTGIWGMIMGLLMGH. Over 32 to 291 the chain is Cytoplasmic; sequence WIDRARASRR…ELLKSANQTK (260 aa). A disordered region spans residues 177-223; the sequence is ESPTGQQSRQNQSRQNGKSQQRRNNGYSNGHSYGGQRPPSPLRGPTV. Low complexity predominate over residues 181 to 211; that stretch reads GQQSRQNQSRQNGKSQQRRNNGYSNGHSYGG. The J domain maps to 225–291; sequence SACRTLGVRS…ELLKSANQTK (67 aa).

Homodimer.

The protein localises to the cell inner membrane. Regulatory DnaK co-chaperone. Direct interaction between DnaK and DjlA is needed for the induction of the wcaABCDE operon, involved in the synthesis of a colanic acid polysaccharide capsule, possibly through activation of the RcsB/RcsC phosphotransfer signaling pathway. The colanic acid capsule may help the bacterium survive conditions outside the host. This chain is Co-chaperone protein DjlA, found in Pectobacterium atrosepticum (strain SCRI 1043 / ATCC BAA-672) (Erwinia carotovora subsp. atroseptica).